The chain runs to 284 residues: Diaminopimelate epimerase (284 aa).

Substrate is bound by residues Asn-20, Gln-53, and Asn-73. The active-site Proton donor is the Cys-82. Substrate-binding positions include Gly-83–Asn-84, Asn-167, Asn-200, and Glu-218–Arg-219. Cys-227 acts as the Proton acceptor in catalysis. Residue Gly-228–Ser-229 participates in substrate binding.

This sequence belongs to the diaminopimelate epimerase family. In terms of assembly, homodimer.

Its subcellular location is the cytoplasm. The catalysed reaction is (2S,6S)-2,6-diaminopimelate = meso-2,6-diaminopimelate. It functions in the pathway amino-acid biosynthesis; L-lysine biosynthesis via DAP pathway; DL-2,6-diaminopimelate from LL-2,6-diaminopimelate: step 1/1. Functionally, catalyzes the stereoinversion of LL-2,6-diaminopimelate (L,L-DAP) to meso-diaminopimelate (meso-DAP), a precursor of L-lysine and an essential component of the bacterial peptidoglycan. The sequence is that of Diaminopimelate epimerase from Xanthomonas axonopodis pv. citri (strain 306).